We begin with the raw amino-acid sequence, 282 residues long: Pantothenate synthetase (282 aa).

Residue 30–37 (MGALHAGH) coordinates ATP. Histidine 37 functions as the Proton donor in the catalytic mechanism. Glutamine 61 provides a ligand contact to (R)-pantoate. Glutamine 61 serves as a coordination point for beta-alanine. 147–150 (GEKD) is an ATP binding site. Glutamine 153 is a (R)-pantoate binding site. Residues valine 177 and 185–188 (LSSR) contribute to the ATP site.

This sequence belongs to the pantothenate synthetase family. As to quaternary structure, homodimer.

The protein localises to the cytoplasm. It carries out the reaction (R)-pantoate + beta-alanine + ATP = (R)-pantothenate + AMP + diphosphate + H(+). Its pathway is cofactor biosynthesis; (R)-pantothenate biosynthesis; (R)-pantothenate from (R)-pantoate and beta-alanine: step 1/1. In terms of biological role, catalyzes the condensation of pantoate with beta-alanine in an ATP-dependent reaction via a pantoyl-adenylate intermediate. This chain is Pantothenate synthetase, found in Phocaeicola vulgatus (strain ATCC 8482 / DSM 1447 / JCM 5826 / CCUG 4940 / NBRC 14291 / NCTC 11154) (Bacteroides vulgatus).